Here is a 422-residue protein sequence, read N- to C-terminus: Sphingomyelin phosphodiesterase 2 (422 aa).

Position 49 (Glu-49) interacts with Mg(2+). His-272 (proton acceptor) is an active-site residue. 2 helical membrane passes run 325–345 and 354–374; these read ALFGYVMILGLSLLVLLCVLA and AIMLWTPSVGLVLGAGAVYLF. Residues 397-422 form a disordered region; sequence TETQDLGSEPHPTHCRQQEADRAEEK. Residues 412-422 show a composition bias toward basic and acidic residues; sequence RQQEADRAEEK.

This sequence belongs to the neutral sphingomyelinase family. It depends on Mg(2+) as a cofactor.

The protein localises to the membrane. The catalysed reaction is a sphingomyelin + H2O = phosphocholine + an N-acylsphing-4-enine + H(+). It catalyses the reaction 1-O-octadecyl-sn-glycero-3-phosphocholine + H2O = 1-O-octadecyl-sn-glycerol + phosphocholine + H(+). It carries out the reaction an N-(acyl)-sphingosylphosphocholine + H2O = an N-acyl-sphingoid base + phosphocholine + H(+). The enzyme catalyses 1-hexadecanoyl-sn-glycero-3-phosphocholine + H2O = 1-hexadecanoyl-sn-glycerol + phosphocholine + H(+). The catalysed reaction is a sphingosylphosphocholine + H2O = a sphingoid base + phosphocholine + H(+). It catalyses the reaction 1-O-hexadecyl-sn-glycero-3-phosphocholine + H2O = 1-O-hexadecyl-sn-glycerol + phosphocholine + H(+). The protein operates within lipid metabolism; sphingolipid metabolism. Its function is as follows. Catalyzes the hydrolysis of sphingomyelin to form ceramide and phosphocholine. Ceramide mediates numerous cellular functions, such as apoptosis and growth arrest, and is capable of regulating these 2 cellular events independently. Also hydrolyzes sphingosylphosphocholine. Hydrolyze 1-acyl-2-lyso-sn-glycero-3-phosphocholine (lyso-PC) and 1-O-alkyl-2-lyso-sn-glycero-3-phosphocholine (lyso-platelet-activating factor). This chain is Sphingomyelin phosphodiesterase 2 (Smpd2), found in Rattus norvegicus (Rat).